A 444-amino-acid chain; its full sequence is MIINPKNYEHIFYSRGNPTVEVDLETTLGIFRAAVPSGASTGIYEALELRDNDKSRYLGKGVQQAIKNINEIIAPKLIGLDCREQKKIDNMMVQELDGSKTEWGWSKSKLGANAILAISMAICRAGAAANKTSLYKYVAQLAGKNTEKMILPVPCLNVINGGSHAGNKLSFQEFMIVPVGAPSFKEAMRYGAEVYHTLKSEIKKKYGIDATNVGDEGGFAPNILNAHEALDLLVASIKKAGYENKVKIAMDVAASEFYNSETKTYDLDFKTPNNDKSLVKTGQELVDLYIELVKKYPIISIEDPFDQDDWENYAKLTEAIGKDVQIVGDDLLVTNPTRIEKALEKKACNALLLKVNQIGSITEAIEACLLSQKNNWGVMVSHRSGETEDVFIADLVVALRTGQIKTGAPCRSERNAKYNQLFRIEESLGANGSFAGDKFRLQLN.

Residue Ser40 participates in Mg(2+) binding. Phosphoserine is present on Ser40. A Pentapeptide insert motif is present at residues 102-106 (EWGWS). N6-acetyllysine is present on Lys131. Lys136 participates in a covalent cross-link: Glycyl lysine isopeptide (Lys-Gly) (interchain with G-Cter in ubiquitin). Tyr137 carries the post-translational modification Phosphotyrosine. Substrate contacts are provided by His164 and Glu173. The Proton donor role is filled by Glu216. Mg(2+) is bound at residue Asp251. Residues 275-280 (DKSLVK) carry the DKSLVK motif motif. Mg(2+) is bound by residues Glu302 and Asp329. Positions 302 and 329 each coordinate substrate. Thr337 carries the phosphothreonine modification. Lys354 serves as the catalytic Proton acceptor. Lys373 carries the N6-acetyllysine modification. Substrate-binding positions include 381–384 (SHRS) and Lys405.

The protein belongs to the enolase family. As to quaternary structure, homodimer. Forms a complex at least composed of DegP, ENO and HSP70. Interacts with G-actin. Interacts (via the DKSLVK motif) with mammalian host PLG/plasminogen (present in the mosquito blood meal); the interaction occurs at the ookinete cell surface and is required for ookinete invasion of the mosquito midgut. Interacts with A.gambiae EBP; depending on the Plasmodium species, the interaction is either involved in ookinete invasion of the mosquito midgut (P.berghei) or is dispensable (P.falciparum). Mg(2+) serves as cofactor.

It is found in the cytoplasm. The protein localises to the nucleus. Its subcellular location is the cytoskeleton. The protein resides in the cell surface. It localises to the cell membrane. It is found in the vacuole. The catalysed reaction is (2R)-2-phosphoglycerate = phosphoenolpyruvate + H2O. Its pathway is carbohydrate degradation; glycolysis; pyruvate from D-glyceraldehyde 3-phosphate: step 4/5. Its function is as follows. Glycolytic enzyme that catalyzes the conversion of 2-phosphoglycerate to phosphoenolpyruvate. In addition to glycolysis, involved in various processes such as parasite development and invasion. Plays an essential role during ookinete invasion of the mosquito vector midgut by mediating the interaction of the ookinete with the midgut epithelium and, further, by binding to mammalian host plasminogen in the blood meal, whose conversion to active plasmin promotes the invasion process. This Plasmodium yoelii yoelii protein is Enolase.